Consider the following 180-residue polypeptide: ATP-dependent protease subunit HslV (180 aa).

T5 is a catalytic residue. Residues G165, C168, and T171 each coordinate Na(+).

The protein belongs to the peptidase T1B family. HslV subfamily. As to quaternary structure, a double ring-shaped homohexamer of HslV is capped on each side by a ring-shaped HslU homohexamer. The assembly of the HslU/HslV complex is dependent on binding of ATP.

It localises to the cytoplasm. The catalysed reaction is ATP-dependent cleavage of peptide bonds with broad specificity.. Allosterically activated by HslU binding. Its function is as follows. Protease subunit of a proteasome-like degradation complex believed to be a general protein degrading machinery. This Helicobacter pylori (strain ATCC 700392 / 26695) (Campylobacter pylori) protein is ATP-dependent protease subunit HslV.